The chain runs to 491 residues: Probable cytosol aminopeptidase (491 aa).

The Mn(2+) site is built by K264 and D269. K276 is an active-site residue. D287, D346, and E348 together coordinate Mn(2+). Residue R350 is part of the active site.

Belongs to the peptidase M17 family. Mn(2+) serves as cofactor.

It localises to the cytoplasm. It catalyses the reaction Release of an N-terminal amino acid, Xaa-|-Yaa-, in which Xaa is preferably Leu, but may be other amino acids including Pro although not Arg or Lys, and Yaa may be Pro. Amino acid amides and methyl esters are also readily hydrolyzed, but rates on arylamides are exceedingly low.. The catalysed reaction is Release of an N-terminal amino acid, preferentially leucine, but not glutamic or aspartic acids.. In terms of biological role, presumably involved in the processing and regular turnover of intracellular proteins. Catalyzes the removal of unsubstituted N-terminal amino acids from various peptides. This chain is Probable cytosol aminopeptidase, found in Xylella fastidiosa (strain 9a5c).